A 132-amino-acid polypeptide reads, in one-letter code: Small ribosomal subunit protein uS8 (132 aa).

It belongs to the universal ribosomal protein uS8 family. Part of the 30S ribosomal subunit. Contacts proteins S5 and S12.

One of the primary rRNA binding proteins, it binds directly to 16S rRNA central domain where it helps coordinate assembly of the platform of the 30S subunit. This Gluconacetobacter diazotrophicus (strain ATCC 49037 / DSM 5601 / CCUG 37298 / CIP 103539 / LMG 7603 / PAl5) protein is Small ribosomal subunit protein uS8.